The primary structure comprises 70 residues: UPF0519 protein B (70 aa).

Belongs to the UPF0519 family.

This Dictyostelium discoideum (Social amoeba) protein is UPF0519 protein B (sigN122).